A 101-amino-acid polypeptide reads, in one-letter code: Small ribosomal subunit protein bS6 (101 aa).

This sequence belongs to the bacterial ribosomal protein bS6 family.

Its function is as follows. Binds together with bS18 to 16S ribosomal RNA. The chain is Small ribosomal subunit protein bS6 from Arthrobacter sp. (strain FB24).